Reading from the N-terminus, the 280-residue chain is Vacuolar protein sorting-associated protein 71 (280 aa).

The segment covering arginine 64–serine 73 has biased composition (polar residues). Residues arginine 64–glutamine 92 are disordered. Basic and acidic residues predominate over residues arginine 74–glutamine 92. Zn(2+) contacts are provided by cysteine 244, cysteine 247, cysteine 256, cysteine 259, cysteine 264, cysteine 268, histidine 272, and cysteine 277. The HIT-type zinc-finger motif lies at cysteine 244–cysteine 277.

Belongs to the SWR1 complex at least composed of ACT1, ARP4, RVB1, RVB2, ARP6, YAF9, VPS71, VPS72, SWC3, SWC4, SWC5, SWR1 and HTZ1.

It localises to the nucleus. Participates in the catalytic exchange of histone H2A for the H2A variant HZT1, an euchromatin-specific factor, leading to chromatin remodeling and changes in transcription of targeted genes. Indirectly involved in vacuolar protein sorting. The sequence is that of Vacuolar protein sorting-associated protein 71 (VPS71) from Saccharomyces cerevisiae (strain ATCC 204508 / S288c) (Baker's yeast).